The following is an 865-amino-acid chain: ABC transporter ATP-binding/permease protein Rv1747 (865 aa).

The region spanning 29 to 78 (VVVGRDLRADVRVAHPLISRAHLLLRFDQGRWVAIDNGSLNGLYLNNRRV) is the FHA 1 domain. The interval 104 to 205 (GRHRGSAGRP…PAGARGGTEA (102 aa)) is disordered. Residues 135-156 (PQTGTLGSGQLQQLPPATTRIP) are compositionally biased toward low complexity. Thr-152 bears the Phosphothreonine mark. Over residues 157–166 (AAPPSGPQPR) the composition is skewed to pro residues. Thr-210 bears the Phosphothreonine mark. Residues 230–279 (VRIGRANDNDIVIPEVLASRHHATLVPTPGGTEIRDNRSINGTFVNGARV) enclose the FHA 2 domain. The 234-residue stretch at 319-552 (LDVRGVTWTI…VMGTTNWADI (234 aa)) folds into the ABC transporter domain. Position 352–359 (352–359 (GPSGAGKS)) interacts with ATP. The 215-residue stretch at 596 to 810 (RQFSTIARRQ…TPARWGFAAS (215 aa)) folds into the ABC transmembrane type-2 domain. 6 helical membrane-spanning segments follow: residues 614–634 (GYFVFLALLPFIMGALSMSVP), 652–672 (PGQILVLLNVGAVFMGTALTI), 700–720 (VCVYTVLAVVQSAIVTVIVLV), 740–760 (FVDVAVTCVASAMLGLALSAI), 767–787 (IMPLLVVAVMSQLVFSGGMIP), and 836–856 (SAWWFDMAMLVALSVIYVGFV).

In the central section; belongs to the ABC transporter superfamily. It in the C-terminal section; belongs to the ABC-2 integral membrane protein family. As to quaternary structure, homodimer. Interacts with PknF. Phosphorylated by PknF. Can probably be phosphorylated in vivo by other kinases when PknF is missing.

Its subcellular location is the cell membrane. Its activity is regulated as follows. Function is positively regulated by phosphorylation. In terms of biological role, involved in the translocation of an unknown substrate across the membrane. Transmembrane domains (TMD) form a pore in the membrane and the ATP-binding domain (NBD) is responsible for energy generation. Required for virulence. This chain is ABC transporter ATP-binding/permease protein Rv1747, found in Mycobacterium tuberculosis (strain ATCC 25618 / H37Rv).